Consider the following 264-residue polypeptide: Undecaprenyl-diphosphatase (264 aa).

The next 8 membrane-spanning stretches (helical) occupy residues 1-21 (MTVF…FLPI), 40-60 (GLTF…AFFW), 81-101 (MFWY…LLEE), 109-129 (TPLL…WADA), 140-160 (ISMA…IPGV), 183-203 (FSFL…LKDI), 211-231 (AFIT…SFLL), and 239-259 (FALF…LAAA).

This sequence belongs to the UppP family.

The protein resides in the cell membrane. It catalyses the reaction di-trans,octa-cis-undecaprenyl diphosphate + H2O = di-trans,octa-cis-undecaprenyl phosphate + phosphate + H(+). Functionally, catalyzes the dephosphorylation of undecaprenyl diphosphate (UPP). Confers resistance to bacitracin. This Pelotomaculum thermopropionicum (strain DSM 13744 / JCM 10971 / SI) protein is Undecaprenyl-diphosphatase.